The chain runs to 395 residues: Outer membrane protein assembly factor BamB (395 aa).

The signal sequence occupies residues 1 to 20 (MKSWCKNLLAAGLSLAMLSA). A lipid anchor (N-palmitoyl cysteine) is attached at Cys21. Residue Cys21 is the site of S-diacylglycerol cysteine attachment.

The protein belongs to the BamB family. In terms of assembly, part of the Bam complex.

Its subcellular location is the cell outer membrane. In terms of biological role, part of the outer membrane protein assembly complex, which is involved in assembly and insertion of beta-barrel proteins into the outer membrane. This Shewanella oneidensis (strain ATCC 700550 / JCM 31522 / CIP 106686 / LMG 19005 / NCIMB 14063 / MR-1) protein is Outer membrane protein assembly factor BamB.